Consider the following 1298-residue polypeptide: Histone-lysine N-methyltransferase EHMT1 (1298 aa).

Disordered stretches follow at residues methionine 1–alanine 111 and alanine 144–proline 192. Alanine 2 is subject to N-acetylalanine. Residue lysine 22 forms a Glycyl lysine isopeptide (Lys-Gly) (interchain with G-Cter in SUMO1); alternate linkage. Lysine 22 participates in a covalent cross-link: Glycyl lysine isopeptide (Lys-Gly) (interchain with G-Cter in SUMO2); alternate. Basic and acidic residues predominate over residues serine 38–alanine 50. Composition is skewed to polar residues over residues threonine 54–alanine 67 and serine 76–threonine 89. Basic and acidic residues predominate over residues valine 96 to lysine 105. Glycyl lysine isopeptide (Lys-Gly) (interchain with G-Cter in SUMO2) cross-links involve residues lysine 190, lysine 199, lysine 231, lysine 234, lysine 317, and lysine 327. A disordered region spans residues valine 211–lysine 234. Over residues alanine 217 to lysine 234 the composition is skewed to basic and acidic residues. The tract at residues valine 339–tyrosine 479 is disordered. Residues leucine 344 to aspartate 360 are compositionally biased toward acidic residues. Basic and acidic residues predominate over residues glutamate 373 to glycine 393. Over residues glutamate 394–leucine 416 the composition is skewed to acidic residues. Residue lysine 432 forms a Glycyl lysine isopeptide (Lys-Gly) (interchain with G-Cter in SUMO2) linkage. Serine 435 carries the post-translational modification Phosphoserine. Residues proline 440 to proline 452 show a composition bias toward basic residues. Positions serine 460–glycine 474 are enriched in polar residues. Serine 483 carries the post-translational modification Phosphoserine. Residues lysine 492, lysine 559, lysine 644, lysine 659, lysine 684, and lysine 731 each participate in a glycyl lysine isopeptide (Lys-Gly) (interchain with G-Cter in SUMO2) cross-link. The segment at lysine 644–lysine 717 is disordered. 8 ANK repeats span residues phenylalanine 737–phenylalanine 766, asparagine 772–threonine 801, aspartate 805–proline 834, glutamate 838–cysteine 868, glycine 872–isoleucine 901, glutamate 905–alanine 934, histidine 938–leucine 967, and glutamate 971–serine 1004. A histone H3K9me binding region spans residues glutamate 905 to asparagine 907. A phosphoserine mark is found at serine 1004 and serine 1048. The Pre-SET domain maps to glutamine 1060–glycine 1123. Cysteine 1062, cysteine 1064, cysteine 1068, cysteine 1073, cysteine 1075, cysteine 1105, cysteine 1109, cysteine 1111, and cysteine 1115 together coordinate Zn(2+). The region spanning alanine 1126–glycine 1243 is the SET domain. S-adenosyl-L-methionine contacts are provided by residues methionine 1136 to tryptophan 1138, tyrosine 1173, and asparagine 1200 to histidine 1201. Residues aspartate 1162–aspartate 1181 form an interaction with histone H3 region. Cysteine 1203 lines the Zn(2+) pocket. The tract at residues tyrosine 1242–arginine 1245 is interaction with histone H3. Cysteine 1256 contributes to the Zn(2+) binding site. Arginine 1257 contacts S-adenosyl-L-methionine. Positions 1258 and 1263 each coordinate Zn(2+). The tract at residues glutamine 1274–leucine 1298 is disordered.

The protein belongs to the class V-like SAM-binding methyltransferase superfamily. As to quaternary structure, heterodimer; heterodimerizes with EHMT2. Interacts with WIZ and EHMT2. Part of the E2F6.com-1 complex in G0 phase composed of E2F6, MGA, MAX, TFDP1, CBX3, BAT8, EHMT1, RING1, RNF2, MBLR, L3MBTL2 and YAF2. Interacts (via ANK repeats) with RELA (when monomethylated at 'Lys-310'). Interacts with MPHOSPH8. Interacts with CDYL. Interacts with REST only in the presence of CDYL. Part of a complex containing at least CDYL, REST, WIZ, SETB1, EHMT1 and EHMT2. Interacts with BAZ2B. Widely expressed.

Its subcellular location is the nucleus. It is found in the chromosome. The catalysed reaction is N(6)-methyl-L-lysyl(9)-[histone H3] + S-adenosyl-L-methionine = N(6),N(6)-dimethyl-L-lysyl(9)-[histone H3] + S-adenosyl-L-homocysteine + H(+). The enzyme catalyses L-lysyl(9)-[histone H3] + S-adenosyl-L-methionine = N(6)-methyl-L-lysyl(9)-[histone H3] + S-adenosyl-L-homocysteine + H(+). Methyltransferase activity is inhibited by BIX-01294. Efficiently inhibited by compound E72, a BIX-01294 derivative in which the diazepane ring and the benzyl are replaced with a 3-dimethylaminopropyl and a 5-aminopentyl group at sites B and C, respectively. Its function is as follows. Histone methyltransferase that specifically mono- and dimethylates 'Lys-9' of histone H3 (H3K9me1 and H3K9me2, respectively) in euchromatin. H3K9me represents a specific tag for epigenetic transcriptional repression by recruiting HP1 proteins to methylated histones. Also weakly methylates 'Lys-27' of histone H3 (H3K27me). Also required for DNA methylation, the histone methyltransferase activity is not required for DNA methylation, suggesting that these 2 activities function independently. Probably targeted to histone H3 by different DNA-binding proteins like E2F6, MGA, MAX and/or DP1. During G0 phase, it probably contributes to silencing of MYC- and E2F-responsive genes, suggesting a role in G0/G1 transition in cell cycle. In addition to the histone methyltransferase activity, also methylates non-histone proteins: mediates dimethylation of 'Lys-373' of p53/TP53. Represses the expression of mitochondrial function-related genes, perhaps by occupying their promoter regions, working in concert with probable chromatin reader BAZ2B. The polypeptide is Histone-lysine N-methyltransferase EHMT1 (EHMT1) (Homo sapiens (Human)).